The following is a 336-amino-acid chain: MATIKDVAKMAGVSTTTVSHVINKTRFVAKDTEEAVLSAIKQLNYSPSAVARSLKVNTTKSIGMIVTTSEAPYFAEIIHSVEEHCYRQGYSLFLCNTQNDPEKVKNHLEMLAKKRVDGLLVMCSEYTQDSLDLLSSFSTIPMVVMDWGPNANTDVIDDHSFDGGYLATKHLIECGHKKIGIICGELNKTTARTRYEGFEKAMEEAKLTINPSWVLEGAFEPEDGYECMNRLLTQEELPTALFCCNDVMALGAISALTEKGLRVPEDMSIIGYDDIHASRFYAPPLTTIHQSKLRLGRQAVNILLERITHKDEGVQQYSRIDITPELIIRKSVKSIL.

Residues 2–56 (ATIKDVAKMAGVSTTTVSHVINKTRFVAKDTEEAVLSAIKQLNYSPSAVARSLKV) enclose the HTH lacI-type domain. Residues 4–23 (IKDVAKMAGVSTTTVSHVIN) constitute a DNA-binding region (H-T-H motif). A DNA-binding region spans residues 48–56 (SAVARSLKV). Residues Tyr73, Lys188, Thr190, Phe219, and Asp273 each contribute to the hypoxanthine site.

As to quaternary structure, homodimer.

It functions in the pathway purine metabolism; purine nucleotide biosynthesis [regulation]. Its function is as follows. Is the main repressor of the genes involved in the de novo synthesis of purine nucleotides, regulating purB, purC, purEK, purF, purHD, purL, purMN and guaBA expression. PurR is allosterically activated to bind its cognate DNA by binding the purine corepressors, hypoxanthine or guanine, thereby effecting transcription repression. In Haemophilus influenzae (strain 86-028NP), this protein is HTH-type transcriptional repressor PurR.